Reading from the N-terminus, the 414-residue chain is UPF0754 membrane protein tlr2287 (414 aa).

Transmembrane regions (helical) follow at residues 2–22 and 386–406; these read ADIS…IGYF and AIVR…AGVL.

The protein belongs to the UPF0754 family.

Its subcellular location is the cell inner membrane. This Thermosynechococcus vestitus (strain NIES-2133 / IAM M-273 / BP-1) protein is UPF0754 membrane protein tlr2287.